The primary structure comprises 71 residues: Beta-defensin 131A (71 aa).

An N-terminal signal peptide occupies residues 1 to 22; the sequence is MRVLFFVFGVLSLMFTVPPARS. 3 cysteine pairs are disulfide-bonded: C29/C57, C37/C51, and C41/C58.

It belongs to the beta-defensin family.

The protein localises to the secreted. In terms of biological role, has antibacterial activity. Upon stimulation with lipoteichoic acid, promotes cytokines and chemokines production and secretion. This Pan troglodytes (Chimpanzee) protein is Beta-defensin 131A.